The sequence spans 855 residues: Pre-mRNA-splicing factor SYF1 (855 aa).

9 HAT repeats span residues 15-47, 48-80, 90-122, 124-158, 160-192, 198-230, 235-268, 270-305, and 369-407; these read LVFEEEDLPYEEEIMRNQFSVKCWLRYIEFKQG, APKPRLNQLYERALKLLPCSYKLWYRYLKARRA, PAYEDVNNCHERAFVFMHKMPRLWLDYCQFLMD, GRVTHTRRTFDRALRALPITQHSRIWPLYLRFLRS, PLPETAVRGYRRFLKLSPESAEEYIEYLKSSDR, QRLATVVNDERFVSKAGKSNYQLWHELCDLISQ, VQSLNVDAIIRGGLTRFTDQLGKLWCSLADYYIR, GHFEKARDVYEEAIRTVMTVRDFTQVFDSYAQFEES, and GRPREIINTYTEAVQTVDPFKATGKPHTLWVAFAKFYED. Lys-420 bears the N6-acetyllysine mark. HAT repeat units follow at residues 498-530, 532-566, 571-605, 643-677, and 679-713; these read GTFQSTKAVYDRILDLRIATPQIVINYAMFLEE, KYFEESFKAYERGISLFKWPNVSDIWSTYLTKFIS, RKLERARDLFEQALDGCPPKYAKTLYLLYAQLEEE, YGVTHTRGIYQKAIEVLSDEHAREMCLRFADMECK, and GEIDRARAIYSFCSQICDPRTTGAFWQTWKDFEVR. A disordered region spans residues 808-855; sequence AELAQQANPEEIQLGEDEDEDEMDLEPNEVRLEQQSVPAAVFGSLKED. Over residues 820–834 the composition is skewed to acidic residues; it reads QLGEDEDEDEMDLEP. Phosphoserine is present on Ser-851.

Belongs to the crooked-neck family. In terms of assembly, associates with RNA polymerase II, the TCR-specific proteins CKN1/CSA and ERCC6/CSB, and XPA. Identified in the spliceosome C complex. Component of the XAB2 complex, a multimeric protein complex composed of XAB2, PRPF19, AQR, ZNF830, ISY1, and PPIE. Identified in a pentameric intron-binding (IB) complex composed of AQR, XAB2, ISY1, ZNF830 and PPIE that is incorporated into the spliceosome as a preassembled complex. The IB complex does not contain PRPF19.

It localises to the nucleus. Functionally, involved in pre-mRNA splicing as component of the spliceosome. Involved in transcription-coupled repair (TCR), transcription and pre-mRNA splicing. The chain is Pre-mRNA-splicing factor SYF1 (Xab2) from Mus musculus (Mouse).